A 270-amino-acid chain; its full sequence is Undecaprenyl-diphosphatase 1 (270 aa).

Transmembrane regions (helical) follow at residues 5–25 (YYIL…PIPI), 42–62 (IEGF…VLLI), 89–109 (FFFI…GVLF), 117–137 (LKGV…LWII), 192–212 (FSFL…ITDI), 220–240 (TLFV…YISL), and 250–270 (GNLK…LIFL).

Belongs to the UppP family.

The protein resides in the cell membrane. The enzyme catalyses di-trans,octa-cis-undecaprenyl diphosphate + H2O = di-trans,octa-cis-undecaprenyl phosphate + phosphate + H(+). Catalyzes the dephosphorylation of undecaprenyl diphosphate (UPP). Confers resistance to bacitracin. In Bacillus cereus (strain ATCC 10987 / NRS 248), this protein is Undecaprenyl-diphosphatase 1.